Reading from the N-terminus, the 2936-residue chain is MASDKPGPGLEPQPVALLAVGAGGGAGGGGAMGEPRGAAGSGPVVLPAGMINPSVPIRNIRMKFAVLIGLIQVGEVSNRDIVETVLNLLVGGEFDLEMNFIIQDAESITCMTELLEHCDVTCQAEIWSMFTAILRKSVRNLQTSTEVGLIEQVLLKMSAVDDMIADLLVDMLGVLASYSITVKELKLLFSMLRGESGIWPRHAVKLLSVLNQMPQRHGPDTFFNFPGCSAAAIALPPIAKWPYQNGFTLNTWFRMDPLNNINVDKDKPYLYCFRTSKGVGYSAHFVGNCLIVTSLKSKGKGFQHCVKYDFQPRKWYMISIVHIYNRWRNSEIRCYVNGQLVSYGDMAWHVNTNDSYDKCFLGSSETADANRVFCGQLGAVYVFSEALNPAQIFAVHQLGPGYKSTFKFKSESDIHLAEHHKQVLYDGKLASSIAFSYNAKATDAQLCLESSPKENASIFVHSPHALMLQDVKAIVTHSIHSAIHSIGGIQVLFPLFAQLDNRQLNDSQVETTVCATLLAFLVELLKSSVAMQEQMLGGKGFLVIGYLLEKSSRVHITRAVLEQFLSFAKYLDGLSHGAPLLKQLCDHILFNPAIWIHTPAKVQLSLYTYLSAEFIGTATIYTTIRRVGTVLQLMHTLKYYYWVINPADSSGIAPKGLDGPRPSQKEIISLRAFMLLFLKQLILKDRGVKEDELQSILNYLLTMHEDENIHDVLQLLVALMSEHPASMIPAFDQRNGIRVIYKLLASKSESIWVQALKVLGYFLKHLGHKRKVEIMHTHSLFTLLGERLMLHTNTVTVTTYNTLYEILTEQVCTQVVHKPHPEPDSTVKIQNPMILKVVATLLKNSTPSAELMEVRRLFLSDMIKLFSNSRENRRCLLQCSVWQDWMFSLGYINPKSSEEQKITEMVYNIFRILLYHAIKYEWGGWRVWVDTLSIAHSKVTYEAHKEYLAKMYEEYQRQEEENIKKGKKGNVSTISGLSSQTAGAKGGMEIREIEDLSQSQSPESETDYPVSTDTRDLLMSTKVSDDILGSSDRPGSGVHVEVHDLLVDIKAEKVEATEVKLDDMDLSPETLVGGENGALVEVESLLDNVYSAAVEKLQNNVHGSVGIIKKNEEKDNGPLITLADEKEELPNSSTPFLFDKIPRQEEKLLPELSSNHIIPNIQDTQVHLGVSDDLGLLAHMTASVELTCTSSIMEEKDFRIHTTSDGVSSVSERELASSTKGLDYAEMTATTLETESSNSKAVPNVDAGSIISDTERSDDGKESGKEIRKIQTTATTQAVQGRSSTQQDRDLRVDLGFRGMPMTEEQRRQFSPGPRTTMFRIPEFKWSPMHQRLLTDLLFALETDVHVWRSHSTKSVMDFVNSNENIIFVHNTIHLISQMVDNIIIACGGILPLLSAATSPTGSKTELENIEVTQGMSAETAVTFLSRLMAMVDVLVFASSLNFSEIEAEKNMSSGGLMRQCLRLVCCVAVRNCLECRQRQRDRGSKSSHGSSKPQEAPHSVTAASASKTPLENVPGNLSPIKDPDRLLQDVDINRLRAVVFRDVDDSKQAQFLALAVVYFISVLMVSKYRDILEPQRETARTGSQPGRNIRQEINSPTSTVVVIPSIPHPSLNHGLLAKLMPEQSFAHSFYKETPATFPDTVKEKETPTPGEDIQLESSVPHTDSGMGEEQVASILDGAELEPAAGPDAMSELLSTLSSEVKKSQESLTEHPSEMLKPAPSISSISQTKGINVKEILKSLVAAPVEIAECGPEPIPYPDPALKREAHAILPMQFHSFDRSVVVPVKKPPPGSLAVTTVGATAAGSGLPTGSTSSIFAAPGATPKSMINTTGAVDSGSSSSSSSSSFVNGATSKNLPAVQTVAPMPEDSAENMSITAKLERALEKVAPLLREIFVDFAPFLSRTLLGSHGQELLIEGLVCMKSSTSVVELVMLLCSQEWQNSIQKNAGLAFIELINEGRLLCHAMKDHIVRVANEAEFILNRQRAEDVHKHAEFESQCAQYAADRREEEKMCDHLISAAKHRDHVTANQLKQKILNILTNKHGAWGAVSHSQLHDFWRLDYWEDDLRRRRRFVRNAFGSTHAEALLKSAVEYGTEEDVVKSKKAFRSQAIVNQNSETELMLEGDDDAVSLLQEKEIDNLAGPVVLSTPAQLIAPVVVAKGTLSITTTEIYFEVDEDDAAFKKIDTKVLAYTEGLHGKWMFSEIRAVFSRRYLLQNTALEVFMANRTSVMFNFPDQATVKKVVYSLPRVGVGTSYGLPQARRISLATPRQLYKSSNMTQRWQRREISNFEYLMFLNTIAGRTYNDLNQYPVFPWVLTNYESEELDLTLPGNFRDLSKPIGALNPKRAVFYAERYETWEEDQSPPFHYNTHYSTATSALSWLVRIEPFTTFFLNANDGKFDHPDRTFSSIARSWRTSQRDTSDVKELIPEFYYLPEMFVNSNGYHLGVREDEVVVNDVDLPPWAKKPEDFVRINRMALESEFVSCQLHQWIDLIFGYKQRGPEAVRALNVFHYLTYEGSVNLDSITDPVLREAMEAQIQNFGQTPSQLLIEPHPPRSSAMHLCFLPQSPLMFKDQMQQDVIMVLKFPSNSPVTHVAANTLPHLTIPAVVTVTCSRLFAVNRWHNTVGLRGAPGYSLDQAHHLPIEMDPLIANNSGVNKRQITDLVDQSIQINAHCFVVTADNRYILICGFWDKSFRVYSTETGKLTQIVFGHWDVVTCLARSESYIGGDCYIVSGSRDATLLLWYWSGRHHIIGDNPNSSDYPAPRAVLTGHDHEVVCVSVCAELGLVISGAKEGPCLVHTITGDLLRALEGPENCLFPRLISVSSEGHCIIYYERGRFSNFSINGKLLAQMEINDSTRAILLSSDGQNLVTGGDNGVVEVWQACDFKQLYIYPGCDAGIRAMDLSHDQRTLITGMASGSIVAFNIDFNRWHYEHQNRY.

The interval glutamate 961–lysine 985 is disordered. A compositionally biased stretch (polar residues) spans asparagine 970 to alanine 982. A phosphoserine mark is found at serine 1001 and serine 1004. Composition is skewed to polar residues over residues threonine 1203–lysine 1220 and threonine 1231–alanine 1241. 3 disordered regions span residues threonine 1203 to leucine 1222, threonine 1231 to lysine 1265, and isoleucine 1270 to arginine 1289. The segment covering aspartate 1253–lysine 1265 has biased composition (basic and acidic residues). Positions isoleucine 1270–glutamine 1286 are enriched in polar residues. A WD 1 repeat occupies threonine 1316–aspartate 1358. Disordered stretches follow at residues glutamine 1480–isoleucine 1521, proline 1639–methionine 1667, valine 1701–serine 1721, and threonine 1830–alanine 1850. Position 1519 is a phosphoserine (serine 1519). The segment covering valine 1701–glutamate 1714 has biased composition (basic and acidic residues). Phosphoserine occurs at positions 1704 and 1707. The span at serine 1835 to serine 1845 shows a compositional bias: low complexity. The residue at position 2128 (serine 2128) is a Phosphoserine. The BEACH-type PH domain occupies asparagine 2137–proline 2245. The 290-residue stretch at alanine 2264–arginine 2553 folds into the BEACH domain. The residue at position 2565 (serine 2565) is a Phosphoserine. 4 WD repeats span residues glycine 2708–glycine 2751, glycine 2768–glutamate 2808, glutamate 2850–isoleucine 2889, and glycine 2892–glutamate 2931.

The protein belongs to the WD repeat neurobeachin family. Interacts with RII subunit of PKA. In terms of tissue distribution, forebrain, brainstem and cerebellum.

It localises to the membrane. Its subcellular location is the endomembrane system. The protein localises to the postsynaptic cell membrane. Binds to type II regulatory subunits of protein kinase A and anchors/targets them to the membrane. May anchor the kinase to cytoskeletal and/or organelle-associated proteins. May have a role in membrane trafficking. The polypeptide is Neurobeachin (Nbea) (Mus musculus (Mouse)).